A 275-amino-acid chain; its full sequence is Sororin-B (275 aa).

Residues 1–16 show a composition bias toward basic and acidic residues; the sequence is MSERKKRGSSDADSRR. 2 disordered regions span residues 1–42 and 63–117; these read MSER…PAPI and NTGS…EIDV. Polar residues-rich tracts occupy residues 63–76 and 93–112; these read NTGS…SNVT and NAFS…QSSA. Positions 91–93 match the KEN box motif; the sequence is KEN. The FGF motif signature appears at 186 to 188; the sequence is FGF. The segment at 253–275 is C-terminal Sororin domain; that stretch reads VDEWAAIMNAEFDEAEKFDLTVE.

This sequence belongs to the sororin family. In terms of assembly, interacts with the APC/C complex. Interacts with the chromatin-bound cohesin complex; the interaction is indirect, occurs after DNA replication and requires acetylation of the cohesin component smc3. Interacts (via the FGF motif) with pds5a and pds5b; the interaction is direct and prevents the interaction of pds5a with wapl. Ubiquitinated by the APC/C complex in G1, leading to its degradation.

The protein localises to the nucleus. Its subcellular location is the chromosome. It is found in the cytoplasm. Functionally, regulator of sister chromatid cohesion in mitosis stabilizing cohesin complex association with chromatin. May antagonize the action of wapl which stimulates cohesin dissociation from chromatin. Cohesion ensures that chromosome partitioning is accurate in both meiotic and mitotic cells and plays an important role in DNA repair. Required for efficient DNA double-stranded break repair. In Xenopus laevis (African clawed frog), this protein is Sororin-B (cdca5-b).